We begin with the raw amino-acid sequence, 228 residues long: 2,3-bisphosphoglycerate-dependent phosphoglycerate mutase (228 aa).

Substrate contacts are provided by residues 8 to 15, 21 to 22, Arg60, 87 to 90, Lys98, 114 to 115, and 183 to 184; these read RHGQSVWN, TG, ERHY, RR, and GN. His9 acts as the Tele-phosphohistidine intermediate in catalysis. The active-site Proton donor/acceptor is Glu87.

It belongs to the phosphoglycerate mutase family. BPG-dependent PGAM subfamily.

It carries out the reaction (2R)-2-phosphoglycerate = (2R)-3-phosphoglycerate. Its pathway is carbohydrate degradation; glycolysis; pyruvate from D-glyceraldehyde 3-phosphate: step 3/5. Catalyzes the interconversion of 2-phosphoglycerate and 3-phosphoglycerate. In Staphylococcus saprophyticus subsp. saprophyticus (strain ATCC 15305 / DSM 20229 / NCIMB 8711 / NCTC 7292 / S-41), this protein is 2,3-bisphosphoglycerate-dependent phosphoglycerate mutase.